Here is a 356-residue protein sequence, read N- to C-terminus: Histidinol-phosphate aminotransferase 1 (356 aa).

Lys-213 is modified (N6-(pyridoxal phosphate)lysine).

The protein belongs to the class-II pyridoxal-phosphate-dependent aminotransferase family. Histidinol-phosphate aminotransferase subfamily. As to quaternary structure, homodimer. It depends on pyridoxal 5'-phosphate as a cofactor.

It carries out the reaction L-histidinol phosphate + 2-oxoglutarate = 3-(imidazol-4-yl)-2-oxopropyl phosphate + L-glutamate. It functions in the pathway amino-acid biosynthesis; L-histidine biosynthesis; L-histidine from 5-phospho-alpha-D-ribose 1-diphosphate: step 7/9. The polypeptide is Histidinol-phosphate aminotransferase 1 (Burkholderia pseudomallei (strain K96243)).